A 102-amino-acid chain; its full sequence is Large ribosomal subunit protein bL21 (102 aa).

It belongs to the bacterial ribosomal protein bL21 family. In terms of assembly, part of the 50S ribosomal subunit. Contacts protein L20.

In terms of biological role, this protein binds to 23S rRNA in the presence of protein L20. This is Large ribosomal subunit protein bL21 from Bacillus velezensis (strain DSM 23117 / BGSC 10A6 / LMG 26770 / FZB42) (Bacillus amyloliquefaciens subsp. plantarum).